The sequence spans 118 residues: Large ribosomal subunit protein bL19 (118 aa).

It belongs to the bacterial ribosomal protein bL19 family.

This protein is located at the 30S-50S ribosomal subunit interface and may play a role in the structure and function of the aminoacyl-tRNA binding site. This chain is Large ribosomal subunit protein bL19, found in Lactiplantibacillus plantarum (strain ATCC BAA-793 / NCIMB 8826 / WCFS1) (Lactobacillus plantarum).